Consider the following 157-residue polypeptide: DNA gyrase inhibitor (157 aa).

The protein belongs to the DNA gyrase inhibitor family. Interacts with DNA gyrase.

It is found in the cytoplasm. Its function is as follows. Inhibits the supercoiling activity of DNA gyrase. Acts by inhibiting DNA gyrase at an early step, prior to (or at the step of) binding of DNA by the gyrase. It protects cells against toxins that target DNA gyrase, by inhibiting activity of these toxins and reducing the formation of lethal double-strand breaks in the cell. This is DNA gyrase inhibitor from Yersinia enterocolitica serotype O:8 / biotype 1B (strain NCTC 13174 / 8081).